The primary structure comprises 458 residues: MARFLLGAAAIALLAGVSSLLLMVPFAEAYDPLDPNGNITIKWDITQWTPDGYVAVVTIYNFQKYRHIQAPGWSLGWAWAKKEIIWSMAGGQATEQGDCSAFKANIPHCCKRDPRVVDLVPGAPYNMQFGNCCKGGVLTSWVQDPLNAVASFQITVGHSGTSNKTVKAPKNFTLKAPGPGYSCGLAQEVKPPTRFISLDGRRTTQAHVTWNVTCTYSQFVAQRAPTCCVSLSSFYNETIVNCPKCACGCQNKKPGSCVEGNSPYLASVVNGPGKGSLTPLVQCTPHMCPIRVHWHVKLNYRDYWRVKVTITNWNYRMNYSQWNLVVQHPNFENVSTVFSFNYKSLNPYGVINDTAMMWGVKYYNDLLMVAGPDGNVQSELLFRKDRSTFTFDKGWAFPRRIYFNGESCVMPSPDLYPWLPPSSTPRFRTVFLLMSFLVCGTLAFLHNHLVLDKNCGKC.

An N-terminal signal peptide occupies residues 1-29; the sequence is MARFLLGAAAIALLAGVSSLLLMVPFAEA. Residues Asn38, Asn163, Asn171, Asn211, Asn236, Asn318, Asn333, and Asn352 are each glycosylated (N-linked (GlcNAc...) asparagine). The chain crosses the membrane as a helical span at residues 430 to 450; it reads VFLLMSFLVCGTLAFLHNHLV.

This sequence belongs to the COBRA family.

The protein resides in the membrane. The sequence is that of COBRA-like protein 2 (BC1L2) from Oryza sativa subsp. japonica (Rice).